The primary structure comprises 646 residues: MSNNLFTVPEDWQKRAWCDDARYQKMYDESVNDPDAFWSREAQRIDWFEPFSKVKNSSFNGDVDIKWFLDGKLNVAYNCLDRHLEKRGDQTAIIFEGNEPGVEEKITYRQLYERVCRFSNVLKSCGVKKGDRVSIYLPMIPQLAVAMLACARIGAIHSIVFAGFSPDALANRITDAECTILITADEGLRGPKAIGLKEAADEAMDKAGMVKKCIVVKHTGADVPMKAGRDLWWHELTAKESTECPPESMDSEDPLFILYTSGSTGTPKGVLHTTGGYIVYTSLTHQYVFDYHDGDIYWCTADIGWVTGHSYIIYGPLANGAVTIMFEGIPNYPDFSRFWQICDKHQVNIFYTAPTVVRALMQQGDEPVKATSRTSVRLLGTVGEPINPEAWLWYHRVVGEERCPIVDTWWQTETGGIMITPLPGATALKPGSATRPFFGIQPALIDKEGNQLEGPGEGYLVMLDSWPALARTVYGDHRRFKSTYFIQCPGTYFSGDGARRDEDGYYWITGRIDDVINVSGHRLGTAEIESSLVAHPAVSEAAVVGFPHDIKGQAIYAYVTLSSGYEPSEELRKELSLFVRKDIGPIATPEVLQFTDSLPKTRSGKIMRRILRKVACNELDNLGDTSTLADPAVVEALIKNRIDACR.

Residues 189-192 (RGPK), Thr307, and Asn331 each bind CoA. ATP contacts are provided by residues 383–385 (GEP), 407–412 (DTWWQT), Asp496, and Arg511. A CoA-binding site is contributed by Ser519. An ATP-binding site is contributed by Arg522. Mg(2+) contacts are provided by Val533, His535, and Val538. Position 580 (Arg580) interacts with CoA. An N6-acetyllysine modification is found at Lys605.

Belongs to the ATP-dependent AMP-binding enzyme family. Mg(2+) serves as cofactor. Post-translationally, acetylated. Deacetylation by the SIR2-homolog deacetylase activates the enzyme.

It catalyses the reaction acetate + ATP + CoA = acetyl-CoA + AMP + diphosphate. Its function is as follows. Catalyzes the conversion of acetate into acetyl-CoA (AcCoA), an essential intermediate at the junction of anabolic and catabolic pathways. AcsA undergoes a two-step reaction. In the first half reaction, AcsA combines acetate with ATP to form acetyl-adenylate (AcAMP) intermediate. In the second half reaction, it can then transfer the acetyl group from AcAMP to the sulfhydryl group of CoA, forming the product AcCoA. In Desulfatibacillum aliphaticivorans, this protein is Acetyl-coenzyme A synthetase.